Here is a 79-residue protein sequence, read N- to C-terminus: uncharacterized protein (79 aa).

This is an uncharacterized protein from Listeria innocua serovar 6a (strain ATCC BAA-680 / CLIP 11262).